The sequence spans 447 residues: Na(+)-translocating NADH-quinone reductase subunit A (447 aa).

This sequence belongs to the NqrA family. In terms of assembly, composed of six subunits; NqrA, NqrB, NqrC, NqrD, NqrE and NqrF.

The enzyme catalyses a ubiquinone + n Na(+)(in) + NADH + H(+) = a ubiquinol + n Na(+)(out) + NAD(+). In terms of biological role, NQR complex catalyzes the reduction of ubiquinone-1 to ubiquinol by two successive reactions, coupled with the transport of Na(+) ions from the cytoplasm to the periplasm. NqrA to NqrE are probably involved in the second step, the conversion of ubisemiquinone to ubiquinol. The chain is Na(+)-translocating NADH-quinone reductase subunit A from Tolumonas auensis (strain DSM 9187 / NBRC 110442 / TA 4).